The following is a 411-amino-acid chain: Probable tRNA pseudouridine synthase D (411 aa).

The Nucleophile role is filled by D79. The TRUD domain maps to 150-369 (GFPNYFGQQR…STGDRRIVSA (220 aa)).

This sequence belongs to the pseudouridine synthase TruD family.

It carries out the reaction uridine(13) in tRNA = pseudouridine(13) in tRNA. Could be responsible for synthesis of pseudouridine from uracil-13 in transfer RNAs. The chain is Probable tRNA pseudouridine synthase D from Thermoplasma acidophilum (strain ATCC 25905 / DSM 1728 / JCM 9062 / NBRC 15155 / AMRC-C165).